The primary structure comprises 320 residues: Foldase protein PrsA (320 aa).

The first 20 residues, 1 to 20 (MKMINKLIVPVTASALLLGA), serve as a signal peptide directing secretion. Cys-21 carries N-palmitoyl cysteine lipidation. Residue Cys-21 is the site of S-diacylglycerol cysteine attachment. The 107-residue stretch at 139–245 (EDSKKASHIL…FGYHIIKADK (107 aa)) folds into the PpiC domain. The segment at 159–198 (EGLDDKEAKQKAEEIQKEVSKDPSKFGEIAKKESMDTGSA) is disordered.

This sequence belongs to the PrsA family.

The protein localises to the cell membrane. The catalysed reaction is [protein]-peptidylproline (omega=180) = [protein]-peptidylproline (omega=0). Plays a major role in protein secretion by helping the post-translocational extracellular folding of several secreted proteins. This chain is Foldase protein PrsA, found in Staphylococcus aureus (strain bovine RF122 / ET3-1).